Here is a 128-residue protein sequence, read N- to C-terminus: Large ribosomal subunit protein bL12 (128 aa).

It belongs to the bacterial ribosomal protein bL12 family. In terms of assembly, homodimer. Part of the ribosomal stalk of the 50S ribosomal subunit. Forms a multimeric L10(L12)X complex, where L10 forms an elongated spine to which 2 to 4 L12 dimers bind in a sequential fashion. Binds GTP-bound translation factors.

Forms part of the ribosomal stalk which helps the ribosome interact with GTP-bound translation factors. Is thus essential for accurate translation. This chain is Large ribosomal subunit protein bL12, found in Thermotoga petrophila (strain ATCC BAA-488 / DSM 13995 / JCM 10881 / RKU-1).